The sequence spans 90 residues: Small ribosomal subunit protein uS15c (90 aa).

The protein belongs to the universal ribosomal protein uS15 family. Part of the 30S ribosomal subunit.

The protein localises to the plastid. It localises to the chloroplast. This is Small ribosomal subunit protein uS15c (rps15) from Lotus japonicus (Lotus corniculatus var. japonicus).